The primary structure comprises 455 residues: O-acyltransferase pigD (455 aa).

It belongs to the trichothecene 3-O-acetyltransferase family.

It functions in the pathway secondary metabolite biosynthesis. In terms of biological role, O-acetyltransferase; part of the gene cluster that mediates the biosynthesis of azaphilone pigments (MonAzPs), a complex mixture of compounds with a common azaphilone skeleton very widely used as food colorants. Within the pathway, pigD directly transfers the fatty acyl chain from the beta-ketoacyl-ACP produced by the pigJ-pigK fatty acid synthase (FAS) to the C-4 alcohol. The first step of the pathway is performed by the nrPKS pigA that forms the hexaketide precursor from successive condensations of five malonyl-CoA units, with a simple acetyl-CoA starter unit. The role of esterase pigG is not clear, but it may play at most a supplementary role in the formation of the benzaldehyde produced by the pigA nrPKS. This very reactive benzaldehyde is intercepted by the pigC ketoreductase that to provide the first stable enzyme-free MonAzPs intermediate, 6-(4-hydroxy-2-oxopentyl)-3-methyl-2,4-dioxocyclohexane carbaldehyde, also known as M7PKS-1. The FAD-dependent monooxygenase pigN hydroxylates M7PKS-1 at C-4, which triggers the formation of the pyran ring. PigJ, pigK and pigD are involved in the acetylation of the pyran ring. PigJ and pigK form the two subunits of a dedicated fungal FAS that produces the side chain fatty acyl moiety of MonAzPs and pigD transfers the fatty acyl chain to the C-4 alcohol. PigM and pigO are involved in the elimination of the omega-1 alcohol. PigM acts as an O-acetyltransferase that synthesizes the putative O-11 acetyl intermediate whereas pigO eliminates acetic acid to yield an intermediate with a C10(11) double bond. The dehydration of the C-11 alcohol followed by the reduction of the C6(7) double bond by the NAD(P)H-dependent oxidoreductase pigE increases the electrophilicity of the C-5 ketone of the resulting acyl benzopyran. This in turn sets up the C-5 ketone for an intramolecular Knoevenagel aldol condensation with the C-20 enol of the side chain. This condensation affords the characteristic linear tricyclic carbon skeletons of the yellow pigments that serve as the common precursors for the classical yellow pigments monascin and ankaflavin, orange pigments rubopunctatin and monascorubrin, and red pigments ribropunctamine and monascorubramine. The FAD-dependent oxidoreductase pigF is especially invoved in the biosynthesis of orange and red pigments via desaturation of C6(7). This is O-acyltransferase pigD from Monascus ruber (Mold).